The sequence spans 237 residues: MKAALLYEGKAKKVYQSSEDEHQLVLSYKNDATAFNGEKKSQFEGKGRLNNEISSLIFQRLHEAGISTHFIKRLDSTQQIVQKTSIIPLEVVIRNLATGSITKRLGIKEKVSFTPPLLELFYKDDALGDPLINDEHALLLTDITETELAEIKDKAREVNAALQEIFQSIGIKLVDFKLEFGRNKDGEILLSDEVSPDTCRLWDIETNEKLDKDVFRQGTGDLITVYQEILNRLEVHV.

This sequence belongs to the SAICAR synthetase family.

It carries out the reaction 5-amino-1-(5-phospho-D-ribosyl)imidazole-4-carboxylate + L-aspartate + ATP = (2S)-2-[5-amino-1-(5-phospho-beta-D-ribosyl)imidazole-4-carboxamido]succinate + ADP + phosphate + 2 H(+). The protein operates within purine metabolism; IMP biosynthesis via de novo pathway; 5-amino-1-(5-phospho-D-ribosyl)imidazole-4-carboxamide from 5-amino-1-(5-phospho-D-ribosyl)imidazole-4-carboxylate: step 1/2. The protein is Phosphoribosylaminoimidazole-succinocarboxamide synthase of Oceanobacillus iheyensis (strain DSM 14371 / CIP 107618 / JCM 11309 / KCTC 3954 / HTE831).